A 184-amino-acid chain; its full sequence is MLKLRQLQKEKQRQAAQAQAPAQGRSAASPAQLRVEKDLATLELPTTVTLDTKCLGSENKVYLRISPEEGVYRGGHFRFSVVFRDTYPIEPPTVKCLNTIYHPNIDYSGNICLNVLREDWSPVMDLQTVVLGLLFLFLEPNGSDPLNRQAADTMLRDPYRFETNVQATMMGGHLDGQVFDNVRH.

The tract at residues Glu10–Ser29 is disordered. A compositionally biased stretch (low complexity) spans Gln14–Ser29. The UBC core domain occupies Pro30–Leu174. The Glycyl thioester intermediate role is filled by Cys112.

Belongs to the ubiquitin-conjugating enzyme family. UBC12 subfamily.

It catalyses the reaction [E1 NEDD8-activating enzyme]-S-[NEDD8 protein]-yl-L-cysteine + [E2 NEDD8-conjugating enzyme]-L-cysteine = [E1 NEDD8-activating enzyme]-L-cysteine + [E2 NEDD8-conjugating enzyme]-S-[NEDD8-protein]-yl-L-cysteine.. It functions in the pathway protein modification; protein neddylation. Its function is as follows. Accepts the ubiquitin-like protein NEDD8/RUB1 from the UBA3-ULA1 E1 complex and catalyzes its covalent attachment to other proteins. This Eremothecium gossypii (strain ATCC 10895 / CBS 109.51 / FGSC 9923 / NRRL Y-1056) (Yeast) protein is NEDD8-conjugating enzyme UBC12 (UBC12).